Consider the following 266-residue polypeptide: 5'-nucleotidase SurE (266 aa).

A divalent metal cation is bound by residues D8, D9, S39, and N93.

The protein belongs to the SurE nucleotidase family. A divalent metal cation serves as cofactor.

Its subcellular location is the cytoplasm. It catalyses the reaction a ribonucleoside 5'-phosphate + H2O = a ribonucleoside + phosphate. Functionally, nucleotidase that shows phosphatase activity on nucleoside 5'-monophosphates. This is 5'-nucleotidase SurE from Thermococcus gammatolerans (strain DSM 15229 / JCM 11827 / EJ3).